The chain runs to 201 residues: CASP-like protein 1E1 (201 aa).

Residues 1 to 36 are Cytoplasmic-facing; that stretch reads MESQFRPGFDVSQGAGGRASKFGDVVAPTSSTQLPG. A helical membrane pass occupies residues 37-57; the sequence is IILRIVAIVLTFISAVVMGAA. The Extracellular portion of the chain corresponds to 58-87; the sequence is RQTTTVTGIDAETALLTSITVTVKSTYSAA. A helical transmembrane segment spans residues 88-108; that stretch reads YVYFVVANVLVFFYSVVSLVL. The Cytoplasmic segment spans residues 109–127; the sequence is SMVNKARLTSMSLPFSIAD. Residues 128–148 traverse the membrane as a helical segment; that stretch reads LLMVVLLFSSNGAAAAISVVA. Residues 149-173 lie on the Extracellular side of the membrane; sequence EKGQQNLAGWDKICNLFGGLCARVN. Residues 174–194 traverse the membrane as a helical segment; it reads AAIVLSMLASVAYVILVVFGM. The Cytoplasmic segment spans residues 195 to 201; that stretch reads ANLRRSQ.

This sequence belongs to the Casparian strip membrane proteins (CASP) family. In terms of assembly, homodimer and heterodimers.

The protein localises to the cell membrane. The chain is CASP-like protein 1E1 from Musa acuminata (Banana).